The chain runs to 457 residues: Bifunctional protein GlmU (457 aa).

Residues 1-230 form a pyrophosphorylase region; it reads MPLSLPLHIV…AREVEGVNDL (230 aa). UDP-N-acetyl-alpha-D-glucosamine-binding positions include 12–15, K26, Q78, 83–84, 105–107, G140, E155, N170, and N228; these read LAAG, GT, and YGD. Position 107 (D107) interacts with Mg(2+). N228 is a Mg(2+) binding site. Residues 231–251 are linker; sequence WQLTQLERAWQIRAARALCLQ. The interval 252–457 is N-acetyltransferase; sequence GARVADPARL…DSWQRPKKKT (206 aa). UDP-N-acetyl-alpha-D-glucosamine-binding residues include R334 and K352. H364 acts as the Proton acceptor in catalysis. UDP-N-acetyl-alpha-D-glucosamine-binding residues include Y367 and N378. Acetyl-CoA-binding positions include A381, 387–388, S406, A424, and R441; that span reads NY.

It in the N-terminal section; belongs to the N-acetylglucosamine-1-phosphate uridyltransferase family. In the C-terminal section; belongs to the transferase hexapeptide repeat family. Homotrimer. Requires Mg(2+) as cofactor.

The protein resides in the cytoplasm. It carries out the reaction alpha-D-glucosamine 1-phosphate + acetyl-CoA = N-acetyl-alpha-D-glucosamine 1-phosphate + CoA + H(+). It catalyses the reaction N-acetyl-alpha-D-glucosamine 1-phosphate + UTP + H(+) = UDP-N-acetyl-alpha-D-glucosamine + diphosphate. It participates in nucleotide-sugar biosynthesis; UDP-N-acetyl-alpha-D-glucosamine biosynthesis; N-acetyl-alpha-D-glucosamine 1-phosphate from alpha-D-glucosamine 6-phosphate (route II): step 2/2. The protein operates within nucleotide-sugar biosynthesis; UDP-N-acetyl-alpha-D-glucosamine biosynthesis; UDP-N-acetyl-alpha-D-glucosamine from N-acetyl-alpha-D-glucosamine 1-phosphate: step 1/1. Its pathway is bacterial outer membrane biogenesis; LPS lipid A biosynthesis. Catalyzes the last two sequential reactions in the de novo biosynthetic pathway for UDP-N-acetylglucosamine (UDP-GlcNAc). The C-terminal domain catalyzes the transfer of acetyl group from acetyl coenzyme A to glucosamine-1-phosphate (GlcN-1-P) to produce N-acetylglucosamine-1-phosphate (GlcNAc-1-P), which is converted into UDP-GlcNAc by the transfer of uridine 5-monophosphate (from uridine 5-triphosphate), a reaction catalyzed by the N-terminal domain. The polypeptide is Bifunctional protein GlmU (Xylella fastidiosa (strain 9a5c)).